The chain runs to 251 residues: tRNA-cytidine(32) 2-sulfurtransferase 2 (251 aa).

The short motif at serine 33–serine 38 is the PP-loop motif element. Residues cysteine 108, cysteine 111, and cysteine 199 each coordinate [4Fe-4S] cluster.

Belongs to the TtcA family. In terms of assembly, homodimer. Requires Mg(2+) as cofactor. [4Fe-4S] cluster is required as a cofactor.

Its subcellular location is the cytoplasm. It carries out the reaction cytidine(32) in tRNA + S-sulfanyl-L-cysteinyl-[cysteine desulfurase] + AH2 + ATP = 2-thiocytidine(32) in tRNA + L-cysteinyl-[cysteine desulfurase] + A + AMP + diphosphate + H(+). The protein operates within tRNA modification. Catalyzes the ATP-dependent 2-thiolation of cytidine in position 32 of tRNA, to form 2-thiocytidine (s(2)C32). The sulfur atoms are provided by the cysteine/cysteine desulfurase (IscS) system. The chain is tRNA-cytidine(32) 2-sulfurtransferase 2 from Francisella tularensis subsp. tularensis (strain FSC 198).